The primary structure comprises 48 residues: Delta-actitoxin-Bgr2b (48 aa).

3 disulfides stabilise this stretch: Cys-4–Cys-45, Cys-6–Cys-35, and Cys-28–Cys-46.

The protein belongs to the sea anemone sodium channel inhibitory toxin family. Type I subfamily.

It localises to the secreted. It is found in the nematocyst. Its function is as follows. Binds voltage-dependently at site 3 of sodium channels (Nav) and inhibits the inactivation of the activated channels, thereby blocking neuronal transmission. Has effect on SCN4A/SCN1B, and SCN5A/SCN1B, has no effect on SCN2A/SCN1B, and SCN10A/SCN1B. Possesses the highest efficacy for the insect sodium channel para/tipE. Also interacts with sodium channels in cardiac cells. Shows lethality to crabs. The protein is Delta-actitoxin-Bgr2b of Bunodosoma granuliferum (Red warty sea anemone).